Reading from the N-terminus, the 580-residue chain is 2-isopropylmalate synthase (580 aa).

Residues 1–11 (MSATAFPTLST) are compositionally biased toward polar residues. Residues 1–37 (MSATAFPTLSTPAGEIPATAPAWNRQRRSQMPSHRYR) are disordered. Residues 61-334 (PLWVPVDLRD…DPMIDFSDID (274 aa)) enclose the Pyruvate carboxyltransferase domain. 4 residues coordinate Mg(2+): aspartate 70, histidine 273, histidine 275, and asparagine 309. Residues 476–580 (EGEADAPQAD…ARAVAEVRPG (105 aa)) are regulatory domain.

It belongs to the alpha-IPM synthase/homocitrate synthase family. LeuA type 2 subfamily. As to quaternary structure, homodimer. Mg(2+) is required as a cofactor.

Its subcellular location is the cytoplasm. The enzyme catalyses 3-methyl-2-oxobutanoate + acetyl-CoA + H2O = (2S)-2-isopropylmalate + CoA + H(+). It functions in the pathway amino-acid biosynthesis; L-leucine biosynthesis; L-leucine from 3-methyl-2-oxobutanoate: step 1/4. Catalyzes the condensation of the acetyl group of acetyl-CoA with 3-methyl-2-oxobutanoate (2-ketoisovalerate) to form 3-carboxy-3-hydroxy-4-methylpentanoate (2-isopropylmalate). This chain is 2-isopropylmalate synthase, found in Nocardia farcinica (strain IFM 10152).